Consider the following 398-residue polypeptide: Nicotinate phosphoribosyltransferase 2 (398 aa).

H224 carries the phosphohistidine; by autocatalysis modification.

The protein belongs to the NAPRTase family. Transiently phosphorylated on a His residue during the reaction cycle. Phosphorylation strongly increases the affinity for substrates and increases the rate of nicotinate D-ribonucleotide production. Dephosphorylation regenerates the low-affinity form of the enzyme, leading to product release.

The enzyme catalyses nicotinate + 5-phospho-alpha-D-ribose 1-diphosphate + ATP + H2O = nicotinate beta-D-ribonucleotide + ADP + phosphate + diphosphate. It participates in cofactor biosynthesis; NAD(+) biosynthesis; nicotinate D-ribonucleotide from nicotinate: step 1/1. Its function is as follows. Catalyzes the synthesis of beta-nicotinate D-ribonucleotide from nicotinate and 5-phospho-D-ribose 1-phosphate at the expense of ATP. The polypeptide is Nicotinate phosphoribosyltransferase 2 (Pseudomonas aeruginosa (strain ATCC 15692 / DSM 22644 / CIP 104116 / JCM 14847 / LMG 12228 / 1C / PRS 101 / PAO1)).